An 86-amino-acid chain; its full sequence is Acyl carrier protein (86 aa).

Positions Ala-2 to Gly-82 constitute a Carrier domain. At Ser-37 the chain carries O-(pantetheine 4'-phosphoryl)serine.

This sequence belongs to the acyl carrier protein (ACP) family. Post-translationally, 4'-phosphopantetheine is transferred from CoA to a specific serine of apo-ACP by AcpS. This modification is essential for activity because fatty acids are bound in thioester linkage to the sulfhydryl of the prosthetic group.

The protein localises to the cytoplasm. Its pathway is lipid metabolism; fatty acid biosynthesis. Its function is as follows. Carrier of the growing fatty acid chain in fatty acid biosynthesis. This is Acyl carrier protein from Dehalococcoides mccartyi (strain ATCC BAA-2100 / JCM 16839 / KCTC 5957 / BAV1).